A 349-amino-acid chain; its full sequence is Phosphoribosylformylglycinamidine cyclo-ligase (349 aa).

It belongs to the AIR synthase family.

Its subcellular location is the cytoplasm. The enzyme catalyses 2-formamido-N(1)-(5-O-phospho-beta-D-ribosyl)acetamidine + ATP = 5-amino-1-(5-phospho-beta-D-ribosyl)imidazole + ADP + phosphate + H(+). It participates in purine metabolism; IMP biosynthesis via de novo pathway; 5-amino-1-(5-phospho-D-ribosyl)imidazole from N(2)-formyl-N(1)-(5-phospho-D-ribosyl)glycinamide: step 2/2. The polypeptide is Phosphoribosylformylglycinamidine cyclo-ligase (Lactobacillus helveticus (strain DPC 4571)).